The primary structure comprises 56 residues: Arcadin-3 (56 aa).

The protein localises to the cytoplasm. It is found in the cytoskeleton. Functionally, part of an actin-like archaeal cytoskeleton. This is Arcadin-3 from Pyrobaculum calidifontis (strain DSM 21063 / JCM 11548 / VA1).